We begin with the raw amino-acid sequence, 245 residues long: MSGHSKWATTKNHKFAQDAKRSKMFQKFSKEIIVAATLGGADPDSNPALKLAIAKAKAKSMPKANIEKAIAKVAGGSKDGANYVSYLYSGTAMGGVTFLISCLSDNFNRLSSNIKHYFTKHNGQLGKQGAIPYVFDQKGIIEIAKSDAAEDELMMVALEAGASDFFSEDDSFIIYSEPTNFQVLKQTLDDNFKIENYLTAEVTYIANTEVDVDKAKLEQIEAFVSLLEDDDDIQEVYHNAYCEDN.

Belongs to the TACO1 family.

It is found in the cytoplasm. This is Probable transcriptional regulatory protein MARTH_orf271 from Metamycoplasma arthritidis (strain 158L3-1) (Mycoplasma arthritidis).